The chain runs to 132 residues: Large-conductance mechanosensitive channel (132 aa).

The next 2 helical transmembrane spans lie at 14-34 (VIDLAVGVVIGAAFGKIVSSL) and 67-87 (GNFIQTIFDFLIIAAAIFMFV).

This sequence belongs to the MscL family. Homopentamer.

It localises to the cell membrane. In terms of biological role, channel that opens in response to stretch forces in the membrane lipid bilayer. May participate in the regulation of osmotic pressure changes within the cell. This Bacillus cereus (strain AH820) protein is Large-conductance mechanosensitive channel.